Here is a 181-residue protein sequence, read N- to C-terminus: Ribonuclease M5 (181 aa).

The 84-residue stretch at 5–88 folds into the Toprim domain; it reads KEIIVVEGKD…IKHAYLNTKD (84 aa). Mg(2+)-binding residues include glutamate 11, aspartate 57, and aspartate 59.

The protein belongs to the ribonuclease M5 family. The cofactor is Mg(2+).

It localises to the cytoplasm. It catalyses the reaction Endonucleolytic cleavage of RNA, removing 21 and 42 nucleotides, respectively, from the 5'- and 3'-termini of a 5S-rRNA precursor.. Functionally, required for correct processing of both the 5' and 3' ends of 5S rRNA precursor. Cleaves both sides of a double-stranded region yielding mature 5S rRNA in one step. The chain is Ribonuclease M5 from Borreliella burgdorferi (strain ATCC 35210 / DSM 4680 / CIP 102532 / B31) (Borrelia burgdorferi).